The sequence spans 316 residues: Apolipoprotein E (316 aa).

A signal peptide spans M1–A18. 8 repeat units span residues V79 to A100, P101 to G122, S123 to G144, Q145 to L166, R167 to E188, R189 to A210, T211 to H232, and G233 to E254. The interval V79 to E254 is 8 X 22 AA approximate tandem repeats. M142 carries the methionine sulfoxide modification. Position 146 is a phosphoserine (S146). The segment at H157–R167 is LDL and other lipoprotein receptors binding. L161–R164 lines the heparin pocket. Residues A209–M289 form a lipid-binding and lipoprotein association region. A glycan (O-linked (GalNAc...) threonine) is linked at T211. R228 to L235 provides a ligand contact to heparin. The homooligomerization stretch occupies residues S265 to H316. Residues R277 to M289 form a specificity for association with VLDL region.

Belongs to the apolipoprotein A1/A4/E family. In terms of assembly, homotetramer. May interact with ABCA1; functionally associated with ABCA1 in the biogenesis of HDLs. May interact with APP/A4 amyloid-beta peptide; the interaction is extremely stable in vitro but its physiological significance is unclear. May interact with MAPT. May interact with MAP2. In the cerebrospinal fluid, interacts with secreted SORL1. Interacts with PMEL; this allows the loading of PMEL luminal fragment on ILVs to induce fibril nucleation. APOE exists as multiple glycosylated and sialylated glycoforms within cells and in plasma. The extent of glycosylation and sialylation are tissue and context specific. In terms of processing, glycated in plasma VLDL. Post-translationally, phosphorylated by FAM20C in the extracellular medium.

The protein localises to the secreted. The protein resides in the extracellular space. It localises to the extracellular matrix. It is found in the extracellular vesicle. Its subcellular location is the endosome. The protein localises to the multivesicular body. APOE is an apolipoprotein, a protein associating with lipid particles, that mainly functions in lipoprotein-mediated lipid transport between organs via the plasma and interstitial fluids. APOE is a core component of plasma lipoproteins and is involved in their production, conversion and clearance. Apolipoproteins are amphipathic molecules that interact both with lipids of the lipoprotein particle core and the aqueous environment of the plasma. As such, APOE associates with chylomicrons, chylomicron remnants, very low density lipoproteins (VLDL) and intermediate density lipoproteins (IDL) but shows a preferential binding to high-density lipoproteins (HDL). It also binds a wide range of cellular receptors including the LDL receptor/LDLR and the very low-density lipoprotein receptor/VLDLR that mediate the cellular uptake of the APOE-containing lipoprotein particles. Finally, APOE also has a heparin-binding activity and binds heparan-sulfate proteoglycans on the surface of cells, a property that supports the capture and the receptor-mediated uptake of APOE-containing lipoproteins by cells. The protein is Apolipoprotein E (APOE) of Ovis aries musimon (Mouflon).